The chain runs to 795 residues: Protocadherin beta-4 (795 aa).

The first 27 residues, 1–27 (MKKLGRIHPNRQVLAFILMVFLSQVRL), serve as a signal peptide directing secretion. The Extracellular segment spans residues 28–689 (EPIRYSVLEE…SQADSLTVYL (662 aa)). Cadherin domains follow at residues 34 to 132 (VLEE…SPVF), 137 to 241 (VLLK…APEF), 246 to 346 (YGVQ…PPEL), 351 to 450 (LTSS…APAF), and 455 to 560 (YTLF…SPFV). N-linked (GlcNAc...) asparagine glycosylation occurs at N183. N417 carries an N-linked (GlcNAc...) asparagine glycan. N566 carries N-linked (GlcNAc...) asparagine glycosylation. In terms of domain architecture, Cadherin 6 spans 567 to 670 (GSAPCTELVP…LVDGFSQPYL (104 aa)). Residues 690-710 (VVALASVSSLFLFSVLLFVAV) form a helical membrane-spanning segment. Topologically, residues 711–795 (RLCRRSRAAS…PKFRNSLVFS (85 aa)) are cytoplasmic.

The protein resides in the cell membrane. Its function is as follows. Potential calcium-dependent cell-adhesion protein. May be involved in the establishment and maintenance of specific neuronal connections in the brain. The sequence is that of Protocadherin beta-4 (PCDHB4) from Pan troglodytes (Chimpanzee).